A 431-amino-acid chain; its full sequence is Enolase (431 aa).

Position 167 (Gln-167) interacts with (2R)-2-phosphoglycerate. Glu-209 (proton donor) is an active-site residue. Mg(2+) is bound by residues Asp-246, Glu-289, and Asp-316. (2R)-2-phosphoglycerate-binding residues include Lys-341, Arg-370, Ser-371, and Lys-392. Lys-341 serves as the catalytic Proton acceptor.

This sequence belongs to the enolase family. Component of the RNA degradosome, a multiprotein complex involved in RNA processing and mRNA degradation. Mg(2+) serves as cofactor.

The protein resides in the cytoplasm. It localises to the secreted. It is found in the cell surface. It carries out the reaction (2R)-2-phosphoglycerate = phosphoenolpyruvate + H2O. Its pathway is carbohydrate degradation; glycolysis; pyruvate from D-glyceraldehyde 3-phosphate: step 4/5. Catalyzes the reversible conversion of 2-phosphoglycerate (2-PG) into phosphoenolpyruvate (PEP). It is essential for the degradation of carbohydrates via glycolysis. The sequence is that of Enolase from Shewanella halifaxensis (strain HAW-EB4).